The following is a 258-amino-acid chain: 4-hydroxy-tetrahydrodipicolinate reductase (258 aa).

Position 10–15 (10–15 (GCLGRM)) interacts with NAD(+). Position 38 (Lys-38) interacts with NADP(+). Residues 89–91 (GTT) and 113–116 (AGNM) each bind NAD(+). His-146 functions as the Proton donor/acceptor in the catalytic mechanism. His-147 is a binding site for (S)-2,3,4,5-tetrahydrodipicolinate. Catalysis depends on Lys-150, which acts as the Proton donor. 156-157 (GT) provides a ligand contact to (S)-2,3,4,5-tetrahydrodipicolinate.

Belongs to the DapB family.

It localises to the cytoplasm. The catalysed reaction is (S)-2,3,4,5-tetrahydrodipicolinate + NAD(+) + H2O = (2S,4S)-4-hydroxy-2,3,4,5-tetrahydrodipicolinate + NADH + H(+). It carries out the reaction (S)-2,3,4,5-tetrahydrodipicolinate + NADP(+) + H2O = (2S,4S)-4-hydroxy-2,3,4,5-tetrahydrodipicolinate + NADPH + H(+). The protein operates within amino-acid biosynthesis; L-lysine biosynthesis via DAP pathway; (S)-tetrahydrodipicolinate from L-aspartate: step 4/4. Its function is as follows. Catalyzes the conversion of 4-hydroxy-tetrahydrodipicolinate (HTPA) to tetrahydrodipicolinate. The chain is 4-hydroxy-tetrahydrodipicolinate reductase from Pelagibacter ubique (strain HTCC1062).